Reading from the N-terminus, the 3291-residue chain is Protocadherin-16 (3291 aa).

Positions methionine 1–tryptophan 35 are cleaved as a signal peptide. Topologically, residues glycine 36–alanine 2933 are extracellular. 27 consecutive Cadherin domains span residues glutamine 37–phenylalanine 137, proline 138–phenylalanine 249, asparagine 250–methionine 356, valine 369–phenylalanine 466, leucine 476–phenylalanine 572, glutamine 573–phenylalanine 679, tyrosine 680–phenylalanine 784, glutamate 785–phenylalanine 888, proline 889–phenylalanine 994, aspartate 995–phenylalanine 1105, serine 1100–phenylalanine 1205, isoleucine 1218–leucine 1317, valine 1326–phenylalanine 1429, alanine 1430–phenylalanine 1539, phenylalanine 1539–phenylalanine 1642, proline 1643–phenylalanine 1744, glycine 1745–phenylalanine 1848, proline 1849–phenylalanine 1953, leucine 1976–phenylalanine 2061, proline 2062–phenylalanine 2164, leucine 2165–isoleucine 2270, isoleucine 2270–phenylalanine 2369, serine 2370–phenylalanine 2475, threonine 2476–phenylalanine 2595, threonine 2596–phenylalanine 2699, proline 2700–phenylalanine 2806, and leucine 2807–leucine 2926. N-linked (GlcNAc...) asparagine glycosylation occurs at asparagine 396. A glycan (N-linked (GlcNAc...) asparagine) is linked at asparagine 2354. The segment at serine 2867 to glutamate 2886 is disordered. The chain crosses the membrane as a helical span at residues valine 2934–valine 2954. The Cytoplasmic portion of the chain corresponds to arginine 2955–isoleucine 3291. Residues serine 2978 to glutamate 3033 are disordered. The span at glycine 3004–proline 3013 shows a compositional bias: gly residues. Residue serine 3048 is modified to Phosphoserine. Disordered regions lie at residues serine 3051–threonine 3081 and alanine 3226–isoleucine 3291. The span at serine 3237 to proline 3259 shows a compositional bias: low complexity. Positions proline 3270 to serine 3279 are enriched in polar residues.

In terms of assembly, heterophilic interaction with FAT4; this interaction affects their respective protein levels. As to expression, expressed in the epicardium and atrioventricular sulcus (at protein level).

It is found in the cell membrane. Its function is as follows. Calcium-dependent cell-adhesion protein. Mediates functions in neuroprogenitor cell proliferation and differentiation. In the heart, has a critical role for proper morphogenesis of the mitral valve, acting in the regulation of cell migration involved in valve formation. In Mus musculus (Mouse), this protein is Protocadherin-16 (Dchs1).